A 275-amino-acid chain; its full sequence is 4-hydroxy-tetrahydrodipicolinate reductase (275 aa).

12-17 (GAAGRM) contributes to the NAD(+) binding site. Residue arginine 39 coordinates NADP(+). Residues 102 to 104 (GTT) and 126 to 129 (SGNM) contribute to the NAD(+) site. Histidine 160 serves as the catalytic Proton donor/acceptor. Histidine 161 provides a ligand contact to (S)-2,3,4,5-tetrahydrodipicolinate. Lysine 164 acts as the Proton donor in catalysis. 170-171 (GT) is a (S)-2,3,4,5-tetrahydrodipicolinate binding site.

It belongs to the DapB family.

It localises to the cytoplasm. It catalyses the reaction (S)-2,3,4,5-tetrahydrodipicolinate + NAD(+) + H2O = (2S,4S)-4-hydroxy-2,3,4,5-tetrahydrodipicolinate + NADH + H(+). The enzyme catalyses (S)-2,3,4,5-tetrahydrodipicolinate + NADP(+) + H2O = (2S,4S)-4-hydroxy-2,3,4,5-tetrahydrodipicolinate + NADPH + H(+). The protein operates within amino-acid biosynthesis; L-lysine biosynthesis via DAP pathway; (S)-tetrahydrodipicolinate from L-aspartate: step 4/4. In terms of biological role, catalyzes the conversion of 4-hydroxy-tetrahydrodipicolinate (HTPA) to tetrahydrodipicolinate. In Agrobacterium fabrum (strain C58 / ATCC 33970) (Agrobacterium tumefaciens (strain C58)), this protein is 4-hydroxy-tetrahydrodipicolinate reductase.